We begin with the raw amino-acid sequence, 280 residues long: Phosphonoacetaldehyde hydrolase (280 aa).

Asp20 acts as the Nucleophile in catalysis. Mg(2+) contacts are provided by Asp20 and Ala22. Lys61 serves as the catalytic Schiff-base intermediate with substrate. Asp194 serves as a coordination point for Mg(2+).

The protein belongs to the HAD-like hydrolase superfamily. PhnX family. As to quaternary structure, homodimer. Requires Mg(2+) as cofactor.

The catalysed reaction is phosphonoacetaldehyde + H2O = acetaldehyde + phosphate + H(+). In terms of biological role, involved in phosphonate degradation. In Nitratidesulfovibrio vulgaris (strain DSM 19637 / Miyazaki F) (Desulfovibrio vulgaris), this protein is Phosphonoacetaldehyde hydrolase.